Reading from the N-terminus, the 254-residue chain is Alcohol dehydrogenase 2 (254 aa).

10–33 (FVAGLGGIGLDTSREIVKSGPKNL) is a binding site for NAD(+). Residue S138 coordinates substrate. Y151 acts as the Proton acceptor in catalysis.

Belongs to the short-chain dehydrogenases/reductases (SDR) family. Homodimer.

The catalysed reaction is a primary alcohol + NAD(+) = an aldehyde + NADH + H(+). It carries out the reaction a secondary alcohol + NAD(+) = a ketone + NADH + H(+). This Drosophila montana (Fruit fly) protein is Alcohol dehydrogenase 2 (Adh2).